A 526-amino-acid chain; its full sequence is Alpha-ketoglutaric semialdehyde dehydrogenase (526 aa).

Residues 159-160 (SN), 185-188 (KAHS), and 240-241 (GS) each bind NADP(+). The Proton acceptor role is filled by Glu-264. Cys-301 (nucleophile) is an active-site residue. Glu-393 is a binding site for NADP(+).

Belongs to the aldehyde dehydrogenase family.

It catalyses the reaction 2,5-dioxopentanoate + NADP(+) + H2O = 2-oxoglutarate + NADPH + 2 H(+). Its pathway is carbohydrate acid metabolism; D-glucarate degradation. Functionally, catalyzes the NAD(P)(+)-dependent oxidation of alpha-ketoglutaric semialdehyde (alphaKGSA) to alpha-ketoglutarate in the D-glutarate degradation pathway. The protein is Alpha-ketoglutaric semialdehyde dehydrogenase of Acinetobacter baylyi (strain ATCC 33305 / BD413 / ADP1).